Here is a 159-residue protein sequence, read N- to C-terminus: Phosphopantetheine adenylyltransferase (159 aa).

Residue Ser-8 participates in substrate binding. ATP is bound by residues 8–9 (SF) and His-16. 3 residues coordinate substrate: Lys-40, Leu-72, and Arg-86. Residues 87-89 (GLR), Glu-97, and 122-128 (YSFISSS) contribute to the ATP site.

Belongs to the bacterial CoaD family. In terms of assembly, homohexamer. Mg(2+) is required as a cofactor.

It localises to the cytoplasm. It carries out the reaction (R)-4'-phosphopantetheine + ATP + H(+) = 3'-dephospho-CoA + diphosphate. The protein operates within cofactor biosynthesis; coenzyme A biosynthesis; CoA from (R)-pantothenate: step 4/5. Functionally, reversibly transfers an adenylyl group from ATP to 4'-phosphopantetheine, yielding dephospho-CoA (dPCoA) and pyrophosphate. This is Phosphopantetheine adenylyltransferase from Thermosipho melanesiensis (strain DSM 12029 / CIP 104789 / BI429).